Consider the following 500-residue polypeptide: 7-alpha-hydroxycholest-4-en-3-one 12-alpha-hydroxylase (500 aa).

Residues 4–24 (WCTVLGALLTVVGCLCLSLLL) form a helical membrane-spanning segment. A Phosphoserine modification is found at S325. C439 provides a ligand contact to heme.

The protein belongs to the cytochrome P450 family. Heme is required as a cofactor. As to expression, expressed in liver.

Its subcellular location is the endoplasmic reticulum membrane. The protein localises to the microsome membrane. It carries out the reaction 7alpha-hydroxycholest-4-en-3-one + reduced [NADPH--hemoprotein reductase] + O2 = 7alpha,12alpha-dihydroxycholest-4-en-3-one + oxidized [NADPH--hemoprotein reductase] + H2O + H(+). The enzyme catalyses 5beta-cholestane-3alpha,7alpha-diol + reduced [NADPH--hemoprotein reductase] + O2 = 5beta-cholestane-3alpha,7alpha,12alpha-triol + oxidized [NADPH--hemoprotein reductase] + H2O + H(+). It catalyses the reaction chenodeoxycholate + reduced [NADPH--hemoprotein reductase] + O2 = cholate + oxidized [NADPH--hemoprotein reductase] + H2O + H(+). Its pathway is lipid metabolism; bile acid biosynthesis. In terms of biological role, a cytochrome P450 monooxygenase involved in primary bile acid biosynthesis. Catalyzes the 12alpha-hydroxylation of 7alpha-hydroxy-4-cholesten-3-one, an intermediate metabolite in cholic acid biosynthesis. Controls biliary balance of cholic acid and chenodeoxycholic acid, ultimately regulating the intestinal absorption of dietary lipids. Mechanistically, uses molecular oxygen inserting one oxygen atom into a substrate, and reducing the second into a water molecule, with two electrons provided by NADPH via cytochrome P450 reductase (CPR; NADPH--hemoprotein reductase). The polypeptide is 7-alpha-hydroxycholest-4-en-3-one 12-alpha-hydroxylase (Cyp8b1) (Mus musculus (Mouse)).